The following is a 642-amino-acid chain: Threonine--tRNA ligase (642 aa).

The region spanning 1 to 61 (MPVITLPDGS…ENDAQLSIIT (61 aa)) is the TGS domain. The catalytic stretch occupies residues 243-534 (DHRKIGKQLD…LTEEFAGFFP (292 aa)). K286 carries the N6-acetyllysine modification. Zn(2+) is bound by residues C334, H385, and H511.

Belongs to the class-II aminoacyl-tRNA synthetase family. In terms of assembly, homodimer. Zn(2+) is required as a cofactor.

Its subcellular location is the cytoplasm. It catalyses the reaction tRNA(Thr) + L-threonine + ATP = L-threonyl-tRNA(Thr) + AMP + diphosphate + H(+). Catalyzes the attachment of threonine to tRNA(Thr) in a two-step reaction: L-threonine is first activated by ATP to form Thr-AMP and then transferred to the acceptor end of tRNA(Thr). Also edits incorrectly charged L-seryl-tRNA(Thr). The protein is Threonine--tRNA ligase of Shigella boydii serotype 18 (strain CDC 3083-94 / BS512).